The chain runs to 43 residues: Protein PsbN (43 aa).

Residues 5–27 (TLIAIFISCSLVSFTGYALYTAF) traverse the membrane as a helical segment.

Belongs to the PsbN family.

The protein localises to the plastid. Its subcellular location is the chloroplast thylakoid membrane. May play a role in photosystem I and II biogenesis. The sequence is that of Protein PsbN from Lopidium concinnum (Moss).